The following is a 176-amino-acid chain: Natural cytotoxicity triggering receptor 3 (176 aa).

An N-terminal signal peptide occupies residues 1–18; the sequence is MAWMLLLILIMVYPGSCA. In terms of domain architecture, Ig-like spans 19–126; sequence LWVSQPPEIR…VGTGNGTRLV (108 aa). The Extracellular segment spans residues 19–135; sequence LWVSQPPEIR…VVEKEYPQLG (117 aa). An intrachain disulfide couples Cys-39 to Cys-108. Asn-42 and Asn-121 each carry an N-linked (GlcNAc...) asparagine glycan. The chain crosses the membrane as a helical span at residues 136-156; that stretch reads AGTVLLLRAGFYAVSFLSVAV. Over 157–176 the chain is Cytoplasmic; that stretch reads GSTLYYQGKCHCHMGTHCHS.

The protein belongs to the natural cytotoxicity receptor (NCR) family. As to quaternary structure, homodimer in the unliganted form. Interacts with CD3Z. Interacts with and is activated by binding to NCR3LG1. Interacts with and is activated by binding to BAG6. Interacts with and is inhibited by binding to LGALS3.

The protein localises to the cell membrane. Functionally, cell membrane receptor of natural killer/NK cells that is activated by binding of extracellular ligands including BAG6 and NCR3LG1. Stimulates NK cells cytotoxicity toward neighboring cells producing these ligands. It controls, for instance, NK cells cytotoxicity against tumor cells. Engagement of NCR3 by BAG6 also promotes myeloid dendritic cells (DC) maturation, both through killing DCs that did not acquire a mature phenotype, and inducing the release by NK cells of TNFA and IFNG that promote DC maturation. This chain is Natural cytotoxicity triggering receptor 3 (NCR3), found in Macaca fascicularis (Crab-eating macaque).